Consider the following 300-residue polypeptide: Ornithine carbamoyltransferase (300 aa).

Carbamoyl phosphate contacts are provided by residues 49 to 52, glutamine 76, arginine 100, and 127 to 130; these read STRT and HPCQ. L-ornithine contacts are provided by residues asparagine 158, aspartate 218, and 222–223; that span reads SM. Carbamoyl phosphate contacts are provided by residues 258–259 and arginine 286; that span reads CL.

It belongs to the aspartate/ornithine carbamoyltransferase superfamily. OTCase family.

The protein resides in the cytoplasm. The catalysed reaction is carbamoyl phosphate + L-ornithine = L-citrulline + phosphate + H(+). It functions in the pathway amino-acid biosynthesis; L-arginine biosynthesis; L-arginine from L-ornithine and carbamoyl phosphate: step 1/3. Functionally, reversibly catalyzes the transfer of the carbamoyl group from carbamoyl phosphate (CP) to the N(epsilon) atom of ornithine (ORN) to produce L-citrulline. This Nitratidesulfovibrio vulgaris (strain ATCC 29579 / DSM 644 / CCUG 34227 / NCIMB 8303 / VKM B-1760 / Hildenborough) (Desulfovibrio vulgaris) protein is Ornithine carbamoyltransferase.